The primary structure comprises 437 residues: MTTFSPREIVSELDRFIVGQKDAKRAVAIALRNRWRRQQLKGPLRDEVAPKNILMIGPTGCGKTEIARRLARLAGAPFLKIEATKFTEVGYVGRDVEQIVRDLVEVGIGLTREEKRKAVKAKAEAAAESRILDALVGPTASQATRESFRKKLRASELDDKEVEIELAPSGSQGLPMFEIPGMPGASMGAINISDMLGKALGGQRGKPRRITVAEAYAPLIAEESDKLVDDDALTREAIREVEDNGIVFLDEIDKICAREGRSGADVSREGVQRDLLPLIEGTTVATKHGPVKTDHILFIASGAFHVSKPSDLLPELQGRLPIRVELQPLTVEDFKQILTATEASLIKQTVALMETEGVTLDFTEDAIDALARVAVEVNGSVENIGARRLQTVLERVIDEISFTATDRSGETVPIDAAYVRDRVEDLAANADLSRFIL.

ATP contacts are provided by residues Val-18, 60 to 65 (GCGKTE), Asp-250, Glu-315, and Arg-387.

The protein belongs to the ClpX chaperone family. HslU subfamily. A double ring-shaped homohexamer of HslV is capped on each side by a ring-shaped HslU homohexamer. The assembly of the HslU/HslV complex is dependent on binding of ATP.

Its subcellular location is the cytoplasm. ATPase subunit of a proteasome-like degradation complex; this subunit has chaperone activity. The binding of ATP and its subsequent hydrolysis by HslU are essential for unfolding of protein substrates subsequently hydrolyzed by HslV. HslU recognizes the N-terminal part of its protein substrates and unfolds these before they are guided to HslV for hydrolysis. The polypeptide is ATP-dependent protease ATPase subunit HslU (Methylorubrum extorquens (strain PA1) (Methylobacterium extorquens)).